A 444-amino-acid chain; its full sequence is Homogentisate 1,2-dioxygenase (444 aa).

Residue His-298 is the Proton acceptor of the active site. His-341 and Glu-347 together coordinate Fe cation. Tyr-356 and His-377 together coordinate homogentisate. Residue His-377 coordinates Fe cation.

It belongs to the homogentisate dioxygenase family. Hexamer; dimer of trimers. Requires Fe cation as cofactor.

It catalyses the reaction homogentisate + O2 = 4-maleylacetoacetate + H(+). The protein operates within amino-acid degradation; L-phenylalanine degradation; acetoacetate and fumarate from L-phenylalanine: step 4/6. In terms of biological role, involved in the catabolism of homogentisate (2,5-dihydroxyphenylacetate or 2,5-OH-PhAc), a central intermediate in the degradation of phenylalanine and tyrosine. Catalyzes the oxidative ring cleavage of the aromatic ring of homogentisate to yield maleylacetoacetate. This Burkholderia cenocepacia (strain ATCC BAA-245 / DSM 16553 / LMG 16656 / NCTC 13227 / J2315 / CF5610) (Burkholderia cepacia (strain J2315)) protein is Homogentisate 1,2-dioxygenase.